The chain runs to 537 residues: Phosphoenolpyruvate carboxykinase (ATP) (537 aa).

Substrate contacts are provided by Arg-61, Tyr-195, and Lys-201. ATP is bound by residues Lys-201, His-220, and 236–244 (GLSGTGKTT). Residues Lys-201 and His-220 each coordinate Mn(2+). Position 257 (Asp-257) interacts with Mn(2+). Glu-285 serves as a coordination point for ATP. Positions 312–321 (DFNDGSKTEN) are enriched in basic and acidic residues. The interval 312–339 (DFNDGSKTENTRSAYPLESIPNASPTGR) is disordered. Arg-323 contacts substrate. Residues Arg-323 and Thr-448 each coordinate ATP.

It belongs to the phosphoenolpyruvate carboxykinase (ATP) family. It depends on Mn(2+) as a cofactor.

It is found in the cytoplasm. It catalyses the reaction oxaloacetate + ATP = phosphoenolpyruvate + ADP + CO2. Its pathway is carbohydrate biosynthesis; gluconeogenesis. Its function is as follows. Involved in the gluconeogenesis. Catalyzes the conversion of oxaloacetate (OAA) to phosphoenolpyruvate (PEP) through direct phosphoryl transfer between the nucleoside triphosphate and OAA. This chain is Phosphoenolpyruvate carboxykinase (ATP), found in Rhodopseudomonas palustris (strain BisB18).